The following is a 306-amino-acid chain: tRNA pseudouridine synthase B (306 aa).

Residue Asp48 is the Nucleophile of the active site.

This sequence belongs to the pseudouridine synthase TruB family. Type 1 subfamily.

The enzyme catalyses uridine(55) in tRNA = pseudouridine(55) in tRNA. In terms of biological role, responsible for synthesis of pseudouridine from uracil-55 in the psi GC loop of transfer RNAs. The sequence is that of tRNA pseudouridine synthase B from Ectopseudomonas mendocina (strain ymp) (Pseudomonas mendocina).